We begin with the raw amino-acid sequence, 384 residues long: S-adenosylmethionine synthase (384 aa).

Residue histidine 15 participates in ATP binding. Residue aspartate 17 participates in Mg(2+) binding. Residue glutamate 43 participates in K(+) binding. Residues glutamate 56 and glutamine 99 each contribute to the L-methionine site. The interval 99–109 is flexible loop; it reads QSPDINQGVDR. ATP-binding positions include 164 to 166, 231 to 232, aspartate 240, 246 to 247, alanine 263, and lysine 267; these read DAK, RF, and RK. Aspartate 240 is an L-methionine binding site. Residue lysine 271 coordinates L-methionine.

The protein belongs to the AdoMet synthase family. As to quaternary structure, homotetramer; dimer of dimers. Mg(2+) serves as cofactor. The cofactor is K(+).

The protein localises to the cytoplasm. It carries out the reaction L-methionine + ATP + H2O = S-adenosyl-L-methionine + phosphate + diphosphate. It participates in amino-acid biosynthesis; S-adenosyl-L-methionine biosynthesis; S-adenosyl-L-methionine from L-methionine: step 1/1. In terms of biological role, catalyzes the formation of S-adenosylmethionine (AdoMet) from methionine and ATP. The overall synthetic reaction is composed of two sequential steps, AdoMet formation and the subsequent tripolyphosphate hydrolysis which occurs prior to release of AdoMet from the enzyme. This is S-adenosylmethionine synthase from Shewanella halifaxensis (strain HAW-EB4).